A 37-amino-acid chain; its full sequence is Large ribosomal subunit protein bL36 (37 aa).

This sequence belongs to the bacterial ribosomal protein bL36 family.

This Thermosynechococcus vestitus (strain NIES-2133 / IAM M-273 / BP-1) protein is Large ribosomal subunit protein bL36.